Reading from the N-terminus, the 185-residue chain is Elongation factor P (185 aa).

The protein belongs to the elongation factor P family.

It is found in the cytoplasm. The protein operates within protein biosynthesis; polypeptide chain elongation. Functionally, involved in peptide bond synthesis. Stimulates efficient translation and peptide-bond synthesis on native or reconstituted 70S ribosomes in vitro. Probably functions indirectly by altering the affinity of the ribosome for aminoacyl-tRNA, thus increasing their reactivity as acceptors for peptidyl transferase. The chain is Elongation factor P from Syntrophomonas wolfei subsp. wolfei (strain DSM 2245B / Goettingen).